A 320-amino-acid polypeptide reads, in one-letter code: Cilia- and flagella-associated protein 77 (320 aa).

The interval 1-27 (MPEARSSGPDLTRWRKQQQPVRRTVSQ) is disordered. The segment covering 17–27 (QQQPVRRTVSQ) has biased composition (polar residues).

The protein belongs to the CFAP77 family. Microtubule inner protein component of sperm flagellar doublet microtubules. As to expression, expressed in airway epithelial cells.

The protein resides in the cytoplasm. It localises to the cytoskeleton. Its subcellular location is the cilium axoneme. The protein localises to the flagellum axoneme. Microtubule inner protein (MIP) part of the dynein-decorated doublet microtubules (DMTs) in cilia axoneme, which is required for motile cilia beating. In Homo sapiens (Human), this protein is Cilia- and flagella-associated protein 77.